Consider the following 79-residue polypeptide: Small ribosomal subunit protein bS16 (79 aa).

The protein belongs to the bacterial ribosomal protein bS16 family.

This Solidesulfovibrio magneticus (strain ATCC 700980 / DSM 13731 / RS-1) (Desulfovibrio magneticus) protein is Small ribosomal subunit protein bS16.